A 277-amino-acid polypeptide reads, in one-letter code: Pantothenate synthetase (277 aa).

26 to 33 is an ATP binding site; that stretch reads MGNLHEGH. H33 acts as the Proton donor in catalysis. (R)-pantoate is bound at residue Q57. Q57 lines the beta-alanine pocket. 144–147 lines the ATP pocket; sequence GKKD. Q150 is a (R)-pantoate binding site. Residues V173 and 181-184 each bind ATP; that span reads LSSR.

It belongs to the pantothenate synthetase family. As to quaternary structure, homodimer.

It localises to the cytoplasm. It carries out the reaction (R)-pantoate + beta-alanine + ATP = (R)-pantothenate + AMP + diphosphate + H(+). It functions in the pathway cofactor biosynthesis; (R)-pantothenate biosynthesis; (R)-pantothenate from (R)-pantoate and beta-alanine: step 1/1. Its function is as follows. Catalyzes the condensation of pantoate with beta-alanine in an ATP-dependent reaction via a pantoyl-adenylate intermediate. The protein is Pantothenate synthetase of Paraburkholderia xenovorans (strain LB400).